The following is a 391-amino-acid chain: Nuclear hormone receptor family member nhr-218 (391 aa).

The segment at residues 17-93 (PIPCQICTYQ…MGMKAEKIQQ (77 aa)) is a DNA-binding region (nuclear receptor). NR C4-type zinc fingers lie at residues 20 to 40 (CQIC…CRAC) and 56 to 76 (CKTR…CRLC). One can recognise an NR LBD domain in the interval 146–391 (SRNYSDSPLT…DNFCNLFAMK (246 aa)).

Belongs to the nuclear hormone receptor family.

It localises to the nucleus. Functionally, orphan nuclear receptor. The chain is Nuclear hormone receptor family member nhr-218 (nhr-218) from Caenorhabditis elegans.